A 170-amino-acid chain; its full sequence is Envelope protein 168 (170 aa).

M1 is a topological domain (intravirion). Residues F2–F22 traverse the membrane as a helical segment. At Y23–L170 the chain is on the virion surface side.

This sequence belongs to the asfivirus envelope protein p22 family.

The protein resides in the virion membrane. Its subcellular location is the host cell membrane. This African swine fever virus (isolate Tick/South Africa/Pretoriuskop Pr4/1996) (ASFV) protein is Envelope protein 168.